The following is a 476-amino-acid chain: Sulfate adenylyltransferase subunit 1 (476 aa).

One can recognise a tr-type G domain in the interval 24–243 (KSLLRFLTCG…VDVEKEKEAG (220 aa)). The interval 33–40 (GSVDDGKS) is G1. 33-40 (GSVDDGKS) serves as a coordination point for GTP. Positions 91–95 (GITID) are G2. Positions 112-115 (DTPG) are G3. GTP contacts are provided by residues 112–116 (DTPGH) and 167–170 (NKMD). The interval 167–170 (NKMD) is G4. The segment at 205–207 (SAL) is G5.

Belongs to the TRAFAC class translation factor GTPase superfamily. Classic translation factor GTPase family. CysN/NodQ subfamily. As to quaternary structure, heterodimer composed of CysD, the smaller subunit, and CysN.

The catalysed reaction is sulfate + ATP + H(+) = adenosine 5'-phosphosulfate + diphosphate. It functions in the pathway sulfur metabolism; hydrogen sulfide biosynthesis; sulfite from sulfate: step 1/3. In terms of biological role, with CysD forms the ATP sulfurylase (ATPS) that catalyzes the adenylation of sulfate producing adenosine 5'-phosphosulfate (APS) and diphosphate, the first enzymatic step in sulfur assimilation pathway. APS synthesis involves the formation of a high-energy phosphoric-sulfuric acid anhydride bond driven by GTP hydrolysis by CysN coupled to ATP hydrolysis by CysD. The chain is Sulfate adenylyltransferase subunit 1 from Vibrio vulnificus (strain YJ016).